The primary structure comprises 99 residues: Transmembrane protein 14A (99 aa).

The next 3 helical transmembrane spans lie at 1-21, 24-44, and 79-99; these read MDLIGFGYAALVTFGSILGYK, GGVLSLIAGLFVGFLAGYGAY, and PAGLVAGLSLLMILRLVLLLL.

This sequence belongs to the TMEM14 family.

The protein localises to the mitochondrion membrane. The protein resides in the endoplasmic reticulum membrane. Inhibits apoptosis via negative regulation of the mitochondrial outer membrane permeabilization involved in apoptotic signaling pathway. The sequence is that of Transmembrane protein 14A (TMEM14A) from Bos taurus (Bovine).